A 611-amino-acid chain; its full sequence is Mitochondrial distribution and morphology protein 34 (611 aa).

The region spanning 1 to 195 (MAFNFNWSPL…LPAIIHRLSL (195 aa)) is the SMP-LTD domain. The segment covering 325-342 (SAPLSSQDTASVASSQSR) has biased composition (polar residues). 4 disordered regions span residues 325–347 (SAPLSSQDTASVASSQSRPGLPS), 361–402 (RHSK…STIT), 415–544 (SIIP…PTYT), and 587–611 (SYVGSGSGSGGFWDRSHTPPPAYRH). The segment covering 361–373 (RHSKAHARKRKKR) has biased composition (basic residues). Basic and acidic residues-rich tracts occupy residues 374–385 (VIDLRPHRKPTD) and 444–459 (TLRDRIVDRDDAERTN). Residues 520-529 (PLGPPAPAPI) are compositionally biased toward pro residues.

Belongs to the MDM34 family. As to quaternary structure, component of the ER-mitochondria encounter structure (ERMES) or MDM complex, composed of MMM1, MDM10, MDM12 and MDM34.

The protein localises to the mitochondrion outer membrane. Functionally, component of the ERMES/MDM complex, which serves as a molecular tether to connect the endoplasmic reticulum (ER) and mitochondria. Components of this complex are involved in the control of mitochondrial shape and protein biogenesis, and function in nonvesicular lipid trafficking between the ER and mitochondria. MDM34 is required for the interaction of the ER-resident membrane protein MMM1 and the outer mitochondrial membrane-resident beta-barrel protein MDM10. The chain is Mitochondrial distribution and morphology protein 34 from Paracoccidioides brasiliensis (strain Pb18).